A 132-amino-acid chain; its full sequence is L-ectoine synthase (132 aa).

The protein belongs to the ectoine synthase family.

It carries out the reaction (2S)-4-acetamido-2-aminobutanoate = L-ectoine + H2O. Its pathway is amine and polyamine biosynthesis; ectoine biosynthesis; L-ectoine from L-aspartate 4-semialdehyde: step 3/3. Catalyzes the circularization of gamma-N-acetyl-alpha,gamma-diaminobutyric acid (ADABA) to ectoine (1,4,5,6-tetrahydro-2-methyl-4-pyrimidine carboxylic acid), which is an excellent osmoprotectant. The protein is L-ectoine synthase of Rhodococcus erythropolis (strain PR4 / NBRC 100887).